The following is a 632-amino-acid chain: 2-oxoacid:ferredoxin oxidoreductase subunit alpha (632 aa).

Positions 254 to 258 (YPITP) match the YPITP motif motif. Residues T257 and R345 each coordinate substrate.

As to quaternary structure, heterodimer composed of an alpha and a beta subunit.

The enzyme catalyses a 2-oxocarboxylate + 2 oxidized [2Fe-2S]-[ferredoxin] + CoA = an acyl-CoA + 2 reduced [2Fe-2S]-[ferredoxin] + CO2 + H(+). Catalyzes the coenzyme A-dependent oxidative decarboxylation of different 2-oxoacids such as 2-oxoglutarate, pyruvate and 2-oxobutyrate to form their CoA derivatives. In Saccharolobus solfataricus (Sulfolobus solfataricus), this protein is 2-oxoacid:ferredoxin oxidoreductase subunit alpha.